A 217-amino-acid polypeptide reads, in one-letter code: ATP phosphoribosyltransferase (217 aa).

The protein belongs to the ATP phosphoribosyltransferase family. Short subfamily. In terms of assembly, heteromultimer composed of HisG and HisZ subunits.

The protein resides in the cytoplasm. It catalyses the reaction 1-(5-phospho-beta-D-ribosyl)-ATP + diphosphate = 5-phospho-alpha-D-ribose 1-diphosphate + ATP. The protein operates within amino-acid biosynthesis; L-histidine biosynthesis; L-histidine from 5-phospho-alpha-D-ribose 1-diphosphate: step 1/9. Functionally, catalyzes the condensation of ATP and 5-phosphoribose 1-diphosphate to form N'-(5'-phosphoribosyl)-ATP (PR-ATP). Has a crucial role in the pathway because the rate of histidine biosynthesis seems to be controlled primarily by regulation of HisG enzymatic activity. The chain is ATP phosphoribosyltransferase from Burkholderia lata (strain ATCC 17760 / DSM 23089 / LMG 22485 / NCIMB 9086 / R18194 / 383).